Consider the following 92-residue polypeptide: Em-like protein GEA6 (92 aa).

2 stretches are compositionally biased toward basic and acidic residues: residues 1 to 18 and 37 to 51; these read MASQ…KKGE and AEGR…KEQL. The segment at 1–92 is disordered; that stretch reads MASQQEKKQL…IDESKFRTKT (92 aa).

The protein belongs to the small hydrophilic plant seed protein family. As to expression, present only in nearly dry and dry seeds.

Functionally, it is thought to provide protection for the cytoplasm during the desiccation stage of embryo development. This is Em-like protein GEA6 (EM6) from Arabidopsis thaliana (Mouse-ear cress).